The chain runs to 120 residues: Phosphoribosyl-AMP cyclohydrolase (120 aa).

Position 75 (aspartate 75) interacts with Mg(2+). Cysteine 76 is a Zn(2+) binding site. Residues aspartate 77 and aspartate 79 each coordinate Mg(2+). 2 residues coordinate Zn(2+): cysteine 92 and cysteine 99.

This sequence belongs to the PRA-CH family. In terms of assembly, homodimer. Mg(2+) is required as a cofactor. The cofactor is Zn(2+).

It is found in the cytoplasm. The enzyme catalyses 1-(5-phospho-beta-D-ribosyl)-5'-AMP + H2O = 1-(5-phospho-beta-D-ribosyl)-5-[(5-phospho-beta-D-ribosylamino)methylideneamino]imidazole-4-carboxamide. It functions in the pathway amino-acid biosynthesis; L-histidine biosynthesis; L-histidine from 5-phospho-alpha-D-ribose 1-diphosphate: step 3/9. Its function is as follows. Catalyzes the hydrolysis of the adenine ring of phosphoribosyl-AMP. In Methanosarcina acetivorans (strain ATCC 35395 / DSM 2834 / JCM 12185 / C2A), this protein is Phosphoribosyl-AMP cyclohydrolase.